A 439-amino-acid chain; its full sequence is 26S proteasome regulatory subunit 6A (439 aa).

Met-1 is modified (N-acetylmethionine). Ser-9 is modified (phosphoserine). ATP is bound at residue 227–234; the sequence is GPPGTGKT. Ser-376 carries the post-translational modification Phosphoserine.

It belongs to the AAA ATPase family. As to quaternary structure, component of the 19S proteasome regulatory particle complex. The 26S proteasome consists of a 20S core particle (CP) and two 19S regulatory subunits (RP). The regulatory particle is made of a lid composed of 9 subunits, a base containing 6 ATPases including PSMC3 and few additional components. Interacts with PAAF1. In terms of assembly, (Microbial infection) Interacts with HIV-1 Tat. Sumoylated by UBE2I in response to MEKK1-mediated stimuli.

Its subcellular location is the cytoplasm. The protein localises to the nucleus. Functionally, component of the 26S proteasome, a multiprotein complex involved in the ATP-dependent degradation of ubiquitinated proteins. This complex plays a key role in the maintenance of protein homeostasis by removing misfolded or damaged proteins, which could impair cellular functions, and by removing proteins whose functions are no longer required. Therefore, the proteasome participates in numerous cellular processes, including cell cycle progression, apoptosis, or DNA damage repair. PSMC3 belongs to the heterohexameric ring of AAA (ATPases associated with diverse cellular activities) proteins that unfolds ubiquitinated target proteins that are concurrently translocated into a proteolytic chamber and degraded into peptides. This Homo sapiens (Human) protein is 26S proteasome regulatory subunit 6A (PSMC3).